The primary structure comprises 624 residues: Phosphomethylpyrimidine synthase (624 aa).

A disordered region spans residues 75–99; that stretch reads SPWIESRGDTESYTGRTPFALDDGL. Substrate contacts are provided by residues Asn-226, Met-255, Tyr-284, His-320, 340-342, 381-384, and Glu-420; these read SRG and DGLR. His-424 is a Zn(2+) binding site. Substrate is bound at residue Tyr-447. A Zn(2+)-binding site is contributed by His-488. Cys-568, Cys-571, and Cys-576 together coordinate [4Fe-4S] cluster.

Belongs to the ThiC family. Homodimer. It depends on [4Fe-4S] cluster as a cofactor.

It carries out the reaction 5-amino-1-(5-phospho-beta-D-ribosyl)imidazole + S-adenosyl-L-methionine = 4-amino-2-methyl-5-(phosphooxymethyl)pyrimidine + CO + 5'-deoxyadenosine + formate + L-methionine + 3 H(+). It functions in the pathway cofactor biosynthesis; thiamine diphosphate biosynthesis. Functionally, catalyzes the synthesis of the hydroxymethylpyrimidine phosphate (HMP-P) moiety of thiamine from aminoimidazole ribotide (AIR) in a radical S-adenosyl-L-methionine (SAM)-dependent reaction. The protein is Phosphomethylpyrimidine synthase of Albidiferax ferrireducens (strain ATCC BAA-621 / DSM 15236 / T118) (Rhodoferax ferrireducens).